The sequence spans 300 residues: Porphobilinogen deaminase (300 aa).

At C239 the chain carries S-(dipyrrolylmethanemethyl)cysteine.

This sequence belongs to the HMBS family. Monomer. The cofactor is dipyrromethane.

The catalysed reaction is 4 porphobilinogen + H2O = hydroxymethylbilane + 4 NH4(+). It functions in the pathway porphyrin-containing compound metabolism; protoporphyrin-IX biosynthesis; coproporphyrinogen-III from 5-aminolevulinate: step 2/4. Tetrapolymerization of the monopyrrole PBG into the hydroxymethylbilane pre-uroporphyrinogen in several discrete steps. This is Porphobilinogen deaminase from Francisella tularensis subsp. tularensis (strain FSC 198).